A 110-amino-acid polypeptide reads, in one-letter code: U9-agatoxin-Ao1a (110 aa).

An N-terminal signal peptide occupies residues 1 to 17 (MKLLLAIAGLFLVQTLA). Residues 18–38 (EDVRAHEESSFLAAVAPEEQR) constitute a propeptide that is removed on maturation. Disulfide bonds link cysteine 40–cysteine 54, cysteine 47–cysteine 60, cysteine 51–cysteine 87, cysteine 53–cysteine 72, and cysteine 62–cysteine 70.

It belongs to the neurotoxin 37 family. In terms of tissue distribution, expressed by the venom gland.

It is found in the secreted. This chain is U9-agatoxin-Ao1a, found in Agelena orientalis (Funnel-web spider).